A 275-amino-acid polypeptide reads, in one-letter code: Probable ABC transporter permease protein NosY (275 aa).

The next 6 membrane-spanning stretches (helical) occupy residues 20–40 (WLLA…WFGA), 60–80 (SLAT…AIVG), 111–131 (ILAL…LALV), 146–166 (FMGS…ALSS), 179–199 (LGLW…ILVL), and 250–270 (ALWL…HGLF).

As to quaternary structure, the complex may be composed of an ATP-binding protein (NosF), a transmembrane protein (NosY) and a solute-binding protein (NosD).

Its subcellular location is the cell inner membrane. Its function is as follows. Required for the assembly of the copper chromophores of nitrous oxide reductase. Could be part of the ABC transporter complex NosDFY. The protein is Probable ABC transporter permease protein NosY (nosY) of Pseudomonas aeruginosa (strain ATCC 15692 / DSM 22644 / CIP 104116 / JCM 14847 / LMG 12228 / 1C / PRS 101 / PAO1).